A 116-amino-acid chain; its full sequence is Large ribosomal subunit protein bL17 (116 aa).

It belongs to the bacterial ribosomal protein bL17 family. In terms of assembly, part of the 50S ribosomal subunit. Contacts protein L32.

This chain is Large ribosomal subunit protein bL17, found in Trichodesmium erythraeum (strain IMS101).